A 221-amino-acid polypeptide reads, in one-letter code: Vesicle-associated membrane protein 713 (221 aa).

Residue A2 is modified to N-acetylalanine. Residues 2 to 190 (AIIFALVARG…RTIMWWRNVK (189 aa)) lie on the Cytoplasmic side of the membrane. The Longin domain maps to 7–112 (LVARGTVVLS…SMNDEFSRVL (106 aa)). Residues 127–187 (RMSRIKGEMS…RRYRTIMWWR (61 aa)) form the v-SNARE coiled-coil homology domain. Residues 191–211 (LTIALILVLALVVYIAMAFVC) form a helical; Anchor for type IV membrane protein membrane-spanning segment. At 212-221 (HGPSLPSCFK) the chain is on the vesicular side.

This sequence belongs to the synaptobrevin family. As to quaternary structure, interacts with subunits of the vacuole protein sorting (HOPS) complex including VPS11, VCL1, VPS18, VPS33, VPS39 and VPS41. As to expression, highly expressed in stems and roots. Detected in flowers and leaves.

It is found in the vacuole membrane. Its subcellular location is the prevacuolar compartment membrane. In terms of biological role, involved in the targeting and/or fusion of transport vesicles to their target membrane. In Arabidopsis thaliana (Mouse-ear cress), this protein is Vesicle-associated membrane protein 713.